A 218-amino-acid chain; its full sequence is Capsid protein (218 aa).

Met1 is modified (N-acetylmethionine; by host). Over residues 1–10 the composition is skewed to low complexity; the sequence is MDKSESTSAG. The interval 1 to 29 is disordered; the sequence is MDKSESTSAGRNRRRRLRRGSRSAPSSAD. Residues 11-21 show a composition bias toward basic residues; the sequence is RNRRRRLRRGS.

The protein belongs to the cucumovirus capsid protein family.

Its subcellular location is the virion. Its function is as follows. Capsid protein. Probably binds RNA and plays a role in packaging. The sequence is that of Capsid protein from Cucumis sativus (Cucumber).